We begin with the raw amino-acid sequence, 455 residues long: UPF0210 protein Teth514_2074 (455 aa).

Belongs to the UPF0210 family. Homodimer.

The polypeptide is UPF0210 protein Teth514_2074 (Thermoanaerobacter sp. (strain X514)).